A 194-amino-acid chain; its full sequence is MYQNHKNEILLATPLIKDDIVFTKSVVYLCQNDRHGAMGLIINKPLADTLKDVFEELHIPHTNTFKEILEYPLYMGGPISPHKIMILHTTNGRNYTSTIKLDEGLAITASIDILEDIANNILPEYFLPVVGYSCWTANQLTDEIKSNDWIVTNKLNKKILFNHENKVKWQNHLEHAGYTLQSLDTLFNRNTGNC.

This sequence belongs to the UPF0301 (AlgH) family.

The polypeptide is UPF0301 protein FTM_0963 (Francisella tularensis subsp. mediasiatica (strain FSC147)).